We begin with the raw amino-acid sequence, 131 residues long: Peptide methionine sulfoxide reductase MsrB (131 aa).

One can recognise a MsrB domain in the interval 9–131 (DEDWKKELTP…NSASLKFQKE (123 aa)). Zn(2+) is bound by residues Cys-48, Cys-51, Cys-97, and Cys-100. Residue Cys-120 is the Nucleophile of the active site.

Belongs to the MsrB Met sulfoxide reductase family. It depends on Zn(2+) as a cofactor.

The enzyme catalyses L-methionyl-[protein] + [thioredoxin]-disulfide + H2O = L-methionyl-(R)-S-oxide-[protein] + [thioredoxin]-dithiol. The polypeptide is Peptide methionine sulfoxide reductase MsrB (Leptospira interrogans serogroup Icterohaemorrhagiae serovar Lai (strain 56601)).